The primary structure comprises 157 residues: 6,7-dimethyl-8-ribityllumazine synthase (157 aa).

5-amino-6-(D-ribitylamino)uracil contacts are provided by residues Phe-22, 56 to 58, and 81 to 83; these read AFE and VLI. Position 86–87 (86–87) interacts with (2S)-2-hydroxy-3-oxobutyl phosphate; it reads ET. His-89 (proton donor) is an active-site residue. Phe-114 is a 5-amino-6-(D-ribitylamino)uracil binding site. Arg-128 provides a ligand contact to (2S)-2-hydroxy-3-oxobutyl phosphate.

The protein belongs to the DMRL synthase family.

The enzyme catalyses (2S)-2-hydroxy-3-oxobutyl phosphate + 5-amino-6-(D-ribitylamino)uracil = 6,7-dimethyl-8-(1-D-ribityl)lumazine + phosphate + 2 H2O + H(+). It functions in the pathway cofactor biosynthesis; riboflavin biosynthesis; riboflavin from 2-hydroxy-3-oxobutyl phosphate and 5-amino-6-(D-ribitylamino)uracil: step 1/2. In terms of biological role, catalyzes the formation of 6,7-dimethyl-8-ribityllumazine by condensation of 5-amino-6-(D-ribitylamino)uracil with 3,4-dihydroxy-2-butanone 4-phosphate. This is the penultimate step in the biosynthesis of riboflavin. In Chlamydia muridarum (strain MoPn / Nigg), this protein is 6,7-dimethyl-8-ribityllumazine synthase.